A 209-amino-acid polypeptide reads, in one-letter code: Ribosomal RNA large subunit methyltransferase E (209 aa).

Glycine 60, tryptophan 62, aspartate 80, aspartate 96, and aspartate 121 together coordinate S-adenosyl-L-methionine. Lysine 161 (proton acceptor) is an active-site residue.

It belongs to the class I-like SAM-binding methyltransferase superfamily. RNA methyltransferase RlmE family.

The protein localises to the cytoplasm. The enzyme catalyses uridine(2552) in 23S rRNA + S-adenosyl-L-methionine = 2'-O-methyluridine(2552) in 23S rRNA + S-adenosyl-L-homocysteine + H(+). In terms of biological role, specifically methylates the uridine in position 2552 of 23S rRNA at the 2'-O position of the ribose in the fully assembled 50S ribosomal subunit. The chain is Ribosomal RNA large subunit methyltransferase E from Pseudomonas fluorescens (strain Pf0-1).